Consider the following 284-residue polypeptide: 2-dehydro-3-deoxyphosphooctonate aldolase (284 aa).

The protein belongs to the KdsA family.

Its subcellular location is the cytoplasm. It catalyses the reaction D-arabinose 5-phosphate + phosphoenolpyruvate + H2O = 3-deoxy-alpha-D-manno-2-octulosonate-8-phosphate + phosphate. The protein operates within carbohydrate biosynthesis; 3-deoxy-D-manno-octulosonate biosynthesis; 3-deoxy-D-manno-octulosonate from D-ribulose 5-phosphate: step 2/3. It functions in the pathway bacterial outer membrane biogenesis; lipopolysaccharide biosynthesis. This chain is 2-dehydro-3-deoxyphosphooctonate aldolase, found in Salmonella paratyphi A (strain ATCC 9150 / SARB42).